The chain runs to 111 residues: uncharacterized protein (111 aa).

Residues 48 to 70 form a helical membrane-spanning segment; that stretch reads LFLVPFPASFTRWLTFLFHLVIY.

The protein resides in the membrane. This is an uncharacterized protein from Saccharomyces cerevisiae (strain ATCC 204508 / S288c) (Baker's yeast).